A 267-amino-acid polypeptide reads, in one-letter code: 4-hydroxy-tetrahydrodipicolinate reductase (267 aa).

10-15 contacts NAD(+); sequence GCLGKQ. An NADP(+)-binding site is contributed by Arg-37. NAD(+) is bound by residues 99–101 and 122–125; these read GTT and TTNV. His-154 acts as the Proton donor/acceptor in catalysis. Position 155 (His-155) interacts with (S)-2,3,4,5-tetrahydrodipicolinate. Lys-158 serves as the catalytic Proton donor. Residue 164–165 participates in (S)-2,3,4,5-tetrahydrodipicolinate binding; it reads GT.

Belongs to the DapB family.

Its subcellular location is the cytoplasm. The catalysed reaction is (S)-2,3,4,5-tetrahydrodipicolinate + NAD(+) + H2O = (2S,4S)-4-hydroxy-2,3,4,5-tetrahydrodipicolinate + NADH + H(+). It catalyses the reaction (S)-2,3,4,5-tetrahydrodipicolinate + NADP(+) + H2O = (2S,4S)-4-hydroxy-2,3,4,5-tetrahydrodipicolinate + NADPH + H(+). It participates in amino-acid biosynthesis; L-lysine biosynthesis via DAP pathway; (S)-tetrahydrodipicolinate from L-aspartate: step 4/4. In terms of biological role, catalyzes the conversion of 4-hydroxy-tetrahydrodipicolinate (HTPA) to tetrahydrodipicolinate. This chain is 4-hydroxy-tetrahydrodipicolinate reductase, found in Ehrlichia chaffeensis (strain ATCC CRL-10679 / Arkansas).